The primary structure comprises 509 residues: ATP synthase subunit beta, mitochondrial (509 aa).

Residues 1–32 constitute a mitochondrion transit peptide; that stretch reads MVLPRLIPRLSRSAFKVAQANNRVFNAPFRGM. 189-196 lines the ATP pocket; that stretch reads GAGVGKTV.

As to quaternary structure, F-type ATP synthases have 2 components, the catalytic core F(1) and the membrane-embedded component F(0), linked together by a central stalk and a peripheral stalk. The central stalk, also called rotor shaft, is often seen as part of F(1). The peripheral stalk is seen as part of F(0). F(0) contains the membrane channel next to the rotor. F-type ATP synthases form dimers but each monomer functions independently in ATP generation. The dimer consists of 17 different polypeptides: ATP1 (subunit alpha, 3 molecules per monomer, part of F(1)), ATP2 (subunit beta, 3 copies per monomer, part of F(1)), ATP3 (subunit gamma, part of the central stalk), ATP4 (subunit b, part of the peripheral stalk), ATP5/OSCP (subunit 5/OSCP, part of the peripheral stalk), ATP6 (subunit a, part of the peripheral stalk), ATP7 (subunit d, part of the peripheral stalk), ATP8 (subunit 8, part of the peripheral stalk), OLI1 (subunit c, part of the rotor, 10 molecules per monomer), ATP14 (subunit h, part of the peripheral stalk), ATP15 (subunit epsilon, part of the central stalk), ATP16 (subunit delta, part of the central stalk), ATP17 (subunit f, part of the peripheral stalk), ATP18 (subunit i/j, part of the peripheral stalk), ATP19 (subunit k, dimer-specific, at interface between monomers), ATP20 (subunit g, at interface between monomers), TIM11 (subunit e, at interface between monomers).

The protein localises to the mitochondrion inner membrane. It catalyses the reaction ATP + H2O + 4 H(+)(in) = ADP + phosphate + 5 H(+)(out). Functionally, mitochondrial membrane ATP synthase (F(1)F(0) ATP synthase or Complex V) produces ATP from ADP in the presence of a proton gradient across the membrane which is generated by electron transport complexes of the respiratory chain. F-type ATP synthases consist of two structural domains, F(1) - containing the extramembraneous catalytic core, and F(0) - containing the membrane proton channel, linked together by a central stalk and a peripheral stalk. During catalysis, ATP synthesis in the catalytic domain of F(1) is coupled via a rotary mechanism of the central stalk subunits to proton translocation. Subunits alpha/ATP1 and beta/ATP2 form the catalytic core in F(1). Rotation of the central stalk against the surrounding alpha/ATP1(3)beta/ATP2(3) subunits leads to hydrolysis of ATP in three separate catalytic sites on the beta/ATP2 subunits. This chain is ATP synthase subunit beta, mitochondrial, found in Yarrowia lipolytica (strain CLIB 122 / E 150) (Yeast).